The following is a 430-amino-acid chain: 3-deoxy-D-manno-octulosonic acid transferase (430 aa).

Residues 12–32 (AFLVAAFLAAAPRIFYKVVFH) form a helical; Signal-anchor membrane-spanning segment. The active-site Proton acceptor is glutamate 66. CMP is bound by residues 274–275 (PR), 314–316 (MGI), and 341–344 (NLLE).

Belongs to the glycosyltransferase group 1 family. Glycosyltransferase 30 subfamily.

The protein resides in the cell inner membrane. The catalysed reaction is lipid IVA (E. coli) + CMP-3-deoxy-beta-D-manno-octulosonate = alpha-Kdo-(2-&gt;6)-lipid IVA (E. coli) + CMP + H(+). It carries out the reaction alpha-Kdo-(2-&gt;6)-lipid IVA (E. coli) + CMP-3-deoxy-beta-D-manno-octulosonate = alpha-Kdo-(2-&gt;4)-alpha-Kdo-(2-&gt;6)-lipid IVA (E. coli) + CMP + H(+). The enzyme catalyses alpha-Kdo-(2-&gt;4)-alpha-Kdo-(2-&gt;6)-lipid IVA (E. coli) + CMP-3-deoxy-beta-D-manno-octulosonate = alpha-Kdo-(2-&gt;8)-alpha-Kdo-(2-&gt;4)-alpha-Kdo-(2-&gt;6)-lipid IVA (E. coli) + CMP + H(+). It functions in the pathway bacterial outer membrane biogenesis; LPS core biosynthesis. Involved in lipopolysaccharide (LPS) biosynthesis. Catalyzes the transfer of three 3-deoxy-D-manno-octulosonate (Kdo) residues from CMP-Kdo to lipid IV(A), the tetraacyldisaccharide-1,4'-bisphosphate precursor of lipid A. Thus generates the genus-specific LPS epitope of Chlamydia, composed of the trisaccharide alpha-Kdo-(2-&gt;8)-alpha-Kdo-(2-&gt;4)-alpha-Kdo. The chain is 3-deoxy-D-manno-octulosonic acid transferase (waaA) from Chlamydia muridarum (strain MoPn / Nigg).